Consider the following 475-residue polypeptide: Ankyrin repeat, SAM and basic leucine zipper domain-containing protein 1 (475 aa).

A disordered region spans residues 1-25 (MAASALRGLPVAGGGESSESEDDGW). A phosphoserine mark is found at Ser-17, Ser-18, and Ser-20. ANK repeat units follow at residues 45–74 (EKKE…SVDS), 78–107 (YGWT…NASF), 110–144 (DKQS…DPNV), 148–177 (RLMT…EVNT), 181–210 (NGYT…NKML), and 214–243 (DGKM…PLEG). The SAM domain occupies 272-334 (SYTAFGDLEV…KILAALKELQ (63 aa)).

As to quaternary structure, interacts with DDX4, PIWIL1, RANBP9 and TDRD1.

Its subcellular location is the cytoplasm. Plays a central role during spermatogenesis by repressing transposable elements and preventing their mobilization, which is essential for the germline integrity. Acts via the piRNA metabolic process, which mediates the repression of transposable elements during meiosis by forming complexes composed of piRNAs and Piwi proteins and governs the methylation and subsequent repression of transposons. Its association with pi-bodies suggests a participation in the primary piRNAs metabolic process. Required prior to the pachytene stage to facilitate the production of multiple types of piRNAs, including those associated with repeats involved in the regulation of retrotransposons. May act by mediating protein-protein interactions during germ cell maturation. This is Ankyrin repeat, SAM and basic leucine zipper domain-containing protein 1 (ASZ1) from Pan troglodytes (Chimpanzee).